Consider the following 614-residue polypeptide: Zinc finger and SCAN domain-containing protein 2 (614 aa).

Disordered stretches follow at residues 1-26 (MMAADIPRVTTPLSSLVQVPQEEDRQ) and 43-76 (EAVLQEDGPESEPFPQSAGKGGPQEEVTRGPQGA). Residues 59 to 132 (SAGKGGPQEE…ALVEDLTQTL (74 aa)) enclose the SCAN box domain. 14 consecutive C2H2-type zinc fingers follow at residues 222–244 (YECPQCGKTFSRKSHLITHERTH), 250–272 (YKCDECGKSFSDGSNFSRHQTTH), 278–300 (YKCRDCGKSFSRSANLITHQRIH), 306–328 (FQCAECGKSFSRSPNLIAHQRTH), 334–356 (YSCPECGKSFGNRSSLNTHQGIH), 362–384 (YECKECGESFSYNSNLIRHQRIH), 390–412 (YKCTDCGQRFSQSSALITHRRTH), 418–440 (YQCSECGKSFSRSSNLATHRRTH), 446–468 (YKCGVCGKSFSQSSSLIAHQGMH), 474–496 (YECLTCGESFSWSSNLLKHQRIH), 502–524 (YKCSECGKCFSQRSQLVVHQRTH), 530–552 (YKCLMCGKSFSRGSILVMHQRAH), 558–580 (YRCPECGKGFSWNSVLIIHQRIH), and 586–608 (YKCPECGKGFSNSSNFITHQRTH).

Belongs to the krueppel C2H2-type zinc-finger protein family.

It localises to the nucleus. Functionally, may be involved in transcriptional regulation during the post-meiotic stages of spermatogenesis. This Homo sapiens (Human) protein is Zinc finger and SCAN domain-containing protein 2 (ZSCAN2).